A 185-amino-acid chain; its full sequence is Ribonuclease M5 (185 aa).

The 84-residue stretch at Lys-4 to Ala-87 folds into the Toprim domain. 3 residues coordinate Mg(2+): Glu-10, Asp-56, and Asp-58.

The protein belongs to the ribonuclease M5 family. The cofactor is Mg(2+).

The protein localises to the cytoplasm. It carries out the reaction Endonucleolytic cleavage of RNA, removing 21 and 42 nucleotides, respectively, from the 5'- and 3'-termini of a 5S-rRNA precursor.. Required for correct processing of both the 5' and 3' ends of 5S rRNA precursor. Cleaves both sides of a double-stranded region yielding mature 5S rRNA in one step. The protein is Ribonuclease M5 of Bacillus anthracis.